A 281-amino-acid polypeptide reads, in one-letter code: Pantothenate synthetase (281 aa).

30–37 lines the ATP pocket; sequence MGNLHAGH. Catalysis depends on His-37, which acts as the Proton donor. Gln-61 is a (R)-pantoate binding site. Gln-61 serves as a coordination point for beta-alanine. ATP is bound at residue 149–152; the sequence is GRKD. Gln-155 lines the (R)-pantoate pocket. Residues Val-178 and 186-189 each bind ATP; that span reads MSSR.

The protein belongs to the pantothenate synthetase family. Homodimer.

Its subcellular location is the cytoplasm. It carries out the reaction (R)-pantoate + beta-alanine + ATP = (R)-pantothenate + AMP + diphosphate + H(+). It participates in cofactor biosynthesis; (R)-pantothenate biosynthesis; (R)-pantothenate from (R)-pantoate and beta-alanine: step 1/1. In terms of biological role, catalyzes the condensation of pantoate with beta-alanine in an ATP-dependent reaction via a pantoyl-adenylate intermediate. This chain is Pantothenate synthetase, found in Shewanella amazonensis (strain ATCC BAA-1098 / SB2B).